The sequence spans 415 residues: Gamma-glutamyl phosphate reductase (415 aa).

This sequence belongs to the gamma-glutamyl phosphate reductase family.

It is found in the cytoplasm. The catalysed reaction is L-glutamate 5-semialdehyde + phosphate + NADP(+) = L-glutamyl 5-phosphate + NADPH + H(+). It functions in the pathway amino-acid biosynthesis; L-proline biosynthesis; L-glutamate 5-semialdehyde from L-glutamate: step 2/2. Catalyzes the NADPH-dependent reduction of L-glutamate 5-phosphate into L-glutamate 5-semialdehyde and phosphate. The product spontaneously undergoes cyclization to form 1-pyrroline-5-carboxylate. The sequence is that of Gamma-glutamyl phosphate reductase from Bacillus cereus (strain AH187).